The following is a 479-amino-acid chain: Cyclic AMP-responsive element-binding protein 3-like protein 3 (479 aa).

Topologically, residues 1 to 317 are cytoplasmic; that stretch reads MDGDIAAGKM…QSTSKPAHAG (317 aa). The disordered stretch occupies residues 67-144; that stretch reads CILGPGDSDP…CPEPPRTQVQ (78 aa). Residues 98–110 show a composition bias toward polar residues; sequence PQDTPPRSGTEPA. The 64-residue stretch at 239 to 302 folds into the bZIP domain; the sequence is VLKKIRRKIR…LSLLEQLKHL (64 aa). The interval 241 to 270 is basic motif; that stretch reads KKIRRKIRNKQSAQESRKKKKEYIDGLENR. The interval 281 to 302 is leucine-zipper; the sequence is LQRKVLHLEKQNLSLLEQLKHL. K290 is covalently cross-linked (Glycyl lysine isopeptide (Lys-Gly) (interchain with G-Cter in ubiquitin)). Residues 318–338 form a helical; Signal-anchor for type II membrane protein membrane-spanning segment; that stretch reads TCIAVLLLSFALIILPSISPF. The Lumenal segment spans residues 339–479; that stretch reads NSNKVDSPGD…RLVQDALGVL (141 aa). N-linked (GlcNAc...) asparagine glycans are attached at residues N411, N418, and N425.

It belongs to the bZIP family. ATF subfamily. In terms of assembly, binds DNA as a dimer. May form homodimers. Interacts with ATF6. Interacts with SYNV1/HRD1; this interaction leads to CREB3L3 ubiquitination and proteasomal degradation. Following ER stress a fragment containing the cytoplasmic transcription factor domain is released by proteolysis. The cleavage seems to be performed sequentially by site-1 and site-2 proteases. In terms of processing, N-glycosylation is required for optimal proteolytic activation. Post-translationally, ubiquitinated at Lys-290 by SYNV1/HRD1 via 'Lys-27'-linked ubiquitin. Expressed in adult liver (at protein level) and small intestine.

It is found in the endoplasmic reticulum membrane. It localises to the nucleus. Functionally, transcription factor that may act during endoplasmic reticulum (ER) stress by activating unfolded protein response target genes. Activated in response to cAMP stimulation. Binds to the cAMP response element (CRE). Activates transcription through box-B element. Activates transcription through CRE. May function synergistically with ATF6. In acute inflammatory response, may activate expression of acute phase response (APR) genes. May be involved in growth suppression. Regulates FGF21 transcription. Plays a crucial role in the regulation of triglyceride metabolism and is required for the maintenance of normal plasma triglyceride concentrations. This is Cyclic AMP-responsive element-binding protein 3-like protein 3 (Creb3l3) from Mus musculus (Mouse).